Consider the following 575-residue polypeptide: Dihydroxy-acid dehydratase (575 aa).

The disordered stretch occupies residues 1–25 (MPTTDSARAADIKQPDIKPRSRDVT). A compositionally biased stretch (basic and acidic residues) spans 8-25 (RAADIKQPDIKPRSRDVT). Cys-64 is a binding site for [2Fe-2S] cluster. Mg(2+) is bound at residue Asp-96. Position 137 (Cys-137) interacts with [2Fe-2S] cluster. Positions 138 and 139 each coordinate Mg(2+). Lys-139 is modified (N6-carboxylysine). Residue Cys-214 coordinates [2Fe-2S] cluster. Glu-465 is a Mg(2+) binding site. Ser-491 (proton acceptor) is an active-site residue.

Belongs to the IlvD/Edd family. As to quaternary structure, homodimer. It depends on [2Fe-2S] cluster as a cofactor. Mg(2+) is required as a cofactor.

The enzyme catalyses (2R)-2,3-dihydroxy-3-methylbutanoate = 3-methyl-2-oxobutanoate + H2O. The catalysed reaction is (2R,3R)-2,3-dihydroxy-3-methylpentanoate = (S)-3-methyl-2-oxopentanoate + H2O. It participates in amino-acid biosynthesis; L-isoleucine biosynthesis; L-isoleucine from 2-oxobutanoate: step 3/4. It functions in the pathway amino-acid biosynthesis; L-valine biosynthesis; L-valine from pyruvate: step 3/4. Its function is as follows. Functions in the biosynthesis of branched-chain amino acids. Catalyzes the dehydration of (2R,3R)-2,3-dihydroxy-3-methylpentanoate (2,3-dihydroxy-3-methylvalerate) into 2-oxo-3-methylpentanoate (2-oxo-3-methylvalerate) and of (2R)-2,3-dihydroxy-3-methylbutanoate (2,3-dihydroxyisovalerate) into 2-oxo-3-methylbutanoate (2-oxoisovalerate), the penultimate precursor to L-isoleucine and L-valine, respectively. The polypeptide is Dihydroxy-acid dehydratase (Mycolicibacterium paratuberculosis (strain ATCC BAA-968 / K-10) (Mycobacterium paratuberculosis)).